Here is a 372-residue protein sequence, read N- to C-terminus: Glutamate 5-kinase (372 aa).

An ATP-binding site is contributed by Lys-14. Ser-54, Asp-141, and Asn-153 together coordinate substrate. Residue 173 to 174 (TD) participates in ATP binding. The region spanning 280 to 358 (AGRIVLDQGA…TDILSILGFV (79 aa)) is the PUA domain.

This sequence belongs to the glutamate 5-kinase family.

Its subcellular location is the cytoplasm. The enzyme catalyses L-glutamate + ATP = L-glutamyl 5-phosphate + ADP. The protein operates within amino-acid biosynthesis; L-proline biosynthesis; L-glutamate 5-semialdehyde from L-glutamate: step 1/2. Its function is as follows. Catalyzes the transfer of a phosphate group to glutamate to form L-glutamate 5-phosphate. The polypeptide is Glutamate 5-kinase (Herminiimonas arsenicoxydans).